The sequence spans 178 residues: Caveolin-1 (178 aa).

The residue at position 2 (Ser2) is an N-acetylserine. A Phosphoserine modification is found at Ser2. Residues 2-94 (SGGKYIDSEG…WKASFTTFTV (93 aa)) form a required for homooligomerization region. Over 2-104 (SGGKYIDSEG…TKYWFYRLLS (103 aa)) the chain is Cytoplasmic. At Lys5 the chain carries N6-acetyllysine; alternate. Lys5 participates in a covalent cross-link: Glycyl lysine isopeptide (Lys-Gly) (interchain with G-Cter in ubiquitin); alternate. A Phosphotyrosine modification is found at Tyr6. Residue Ser9 is modified to Phosphoserine. The residue at position 14 (Tyr14) is a Phosphotyrosine; by ABL1. A Phosphotyrosine modification is found at Tyr25. Glycyl lysine isopeptide (Lys-Gly) (interchain with G-Cter in ubiquitin) cross-links involve residues Lys26, Lys30, Lys39, Lys47, and Lys57. The tract at residues 82 to 94 (DGIWKASFTTFTV) is interaction with CAVIN3. The helical intramembrane region spans 105 to 125 (ALFGIPMALIWGIYFAILSFL). At 126–178 (HIWAVVPCIRSYLIEIQCISRIYSICIHTFCDPLFEAIGKIFSNVRIALQKEI) the chain is on the cytoplasmic side. Positions 131-142 (VPCIRSYLIEIQ) are interacts with SPRY1, SPRY2, SPRY3 and SPRY4. Residues Cys133, Cys143, and Cys156 are each lipidated (S-palmitoyl cysteine). The interacts with SPRY1, SPRY2, and SPRY4 stretch occupies residues 149–160 (SICIHTFCDPLF). The interacts with SPRY1, SPRY2, SPRY3 and SPRY4 stretch occupies residues 167 to 178 (FSNVRIALQKEI).

The protein belongs to the caveolin family. As to quaternary structure, homooligomer. Interacts with GLIPR2. Interacts with NOSTRIN. Interacts with SNAP25 and STX1A. Interacts (via the N-terminus) with DPP4; the interaction is direct. Interacts with CTNNB1, CDH1 and JUP. Interacts with PACSIN2; this interaction induces membrane tubulation. Interacts with SLC7A9. Interacts with BMX and BTK. Interacts with TGFBR1. Interacts with CAVIN3 (via leucine-zipper domain) in a cholesterol-sensitive manner. Interacts with CAVIN1. Interacts with EHD2 in a cholesterol-dependent manner. Forms a ternary complex with UBXN6 and VCP; mediates CAV1 targeting to lysosomes for degradation. Interacts with ABCG1; this interaction regulates ABCG1-mediated cholesterol efflux. Interacts with NEU3; this interaction enhances NEU3 sialidase activity within caveola. Interacts (via C-terminus) with SPRY1, SPRY2 (via C-terminus), SPRY3, and SPRY4. Interacts with IGFBP5; this interaction allows trafficking of IGFBP5 from the plasma membrane to the nucleus. Post-translationally, phosphorylated at Tyr-14 by ABL1 in response to oxidative stress. In terms of processing, ubiquitinated. Undergo monoubiquitination and multi- and/or polyubiquitination. Monoubiquitination of N-terminal lysines promotes integration in a ternary complex with UBXN6 and VCP which promotes oligomeric CAV1 targeting to lysosomes for degradation. Ubiquitinated by ZNRF1; leading to degradation and modulation of the TLR4-mediated immune response.

It is found in the golgi apparatus membrane. The protein localises to the cell membrane. The protein resides in the membrane. It localises to the caveola. Its subcellular location is the membrane raft. Its function is as follows. May act as a scaffolding protein within caveolar membranes. Forms a stable heterooligomeric complex with CAV2 that targets to lipid rafts and drives caveolae formation. Mediates the recruitment of CAVIN proteins (CAVIN1/2/3/4) to the caveolae. Interacts directly with G-protein alpha subunits and can functionally regulate their activity. Involved in the costimulatory signal essential for T-cell receptor (TCR)-mediated T-cell activation. Its binding to DPP4 induces T-cell proliferation and NF-kappa-B activation in a T-cell receptor/CD3-dependent manner. Recruits CTNNB1 to caveolar membranes and may regulate CTNNB1-mediated signaling through the Wnt pathway. Negatively regulates TGFB1-mediated activation of SMAD2/3 by mediating the internalization of TGFBR1 from membrane rafts leading to its subsequent degradation. Binds 20(S)-hydroxycholesterol (20(S)-OHC). In Didelphis virginiana (North American opossum), this protein is Caveolin-1 (CAV1).